Here is a 413-residue protein sequence, read N- to C-terminus: Imidazolonepropionase (413 aa).

H70 and H72 together coordinate Fe(3+). Zn(2+) is bound by residues H70 and H72. Residues R79, Y142, and H175 each contribute to the 4-imidazolone-5-propanoate site. Y142 serves as a coordination point for N-formimidoyl-L-glutamate. A Fe(3+)-binding site is contributed by H240. H240 lines the Zn(2+) pocket. Position 243 (E243) interacts with 4-imidazolone-5-propanoate. D315 is a Fe(3+) binding site. Residue D315 participates in Zn(2+) binding. Residues N317 and G319 each contribute to the N-formimidoyl-L-glutamate site. A 4-imidazolone-5-propanoate-binding site is contributed by S320.

This sequence belongs to the metallo-dependent hydrolases superfamily. HutI family. It depends on Zn(2+) as a cofactor. The cofactor is Fe(3+).

The protein resides in the cytoplasm. It carries out the reaction 4-imidazolone-5-propanoate + H2O = N-formimidoyl-L-glutamate. It participates in amino-acid degradation; L-histidine degradation into L-glutamate; N-formimidoyl-L-glutamate from L-histidine: step 3/3. Functionally, catalyzes the hydrolytic cleavage of the carbon-nitrogen bond in imidazolone-5-propanoate to yield N-formimidoyl-L-glutamate. It is the third step in the universal histidine degradation pathway. The protein is Imidazolonepropionase of Treponema denticola (strain ATCC 35405 / DSM 14222 / CIP 103919 / JCM 8153 / KCTC 15104).